A 155-amino-acid chain; its full sequence is Protein Smg homolog (155 aa).

This sequence belongs to the Smg family.

The sequence is that of Protein Smg homolog from Methylococcus capsulatus (strain ATCC 33009 / NCIMB 11132 / Bath).